Here is a 729-residue protein sequence, read N- to C-terminus: U-box domain-containing protein 17 (729 aa).

The U-box domain maps to 304–378 (TVPKDFVCPI…VQWCTASGIS (75 aa)). ARM repeat units lie at residues 438-477 (KENR…NLSI), 479-520 (EKNK…SLSA), 523-562 (EYKK…NLST), and 564-601 (PDNC…LLVR).

It catalyses the reaction S-ubiquitinyl-[E2 ubiquitin-conjugating enzyme]-L-cysteine + [acceptor protein]-L-lysine = [E2 ubiquitin-conjugating enzyme]-L-cysteine + N(6)-ubiquitinyl-[acceptor protein]-L-lysine.. Its pathway is protein modification; protein ubiquitination. Functionally, functions as an E3 ubiquitin ligase. The polypeptide is U-box domain-containing protein 17 (PUB17) (Arabidopsis thaliana (Mouse-ear cress)).